The chain runs to 387 residues: Probable WRKY transcription factor 36 (387 aa).

A DNA-binding region (WRKY) is located at residues 197-264 (CEDPSINDGC…YEGNHDHPLP (68 aa)). The tract at residues 322-366 (RPNYPNQLPDDYPLSSSSFSLNFSSPDPPPPSSHDHTLNFSGLRT) is disordered. The span at 329 to 346 (LPDDYPLSSSSFSLNFSS) shows a compositional bias: low complexity.

Its subcellular location is the nucleus. In terms of biological role, transcription factor. Interacts specifically with the W box (5'-(T)TGAC[CT]-3'), a frequently occurring elicitor-responsive cis-acting element. The protein is Probable WRKY transcription factor 36 (WRKY36) of Arabidopsis thaliana (Mouse-ear cress).